The chain runs to 614 residues: Putative ankyrin repeat protein RBE_0997 (614 aa).

9 ANK repeats span residues 3–32 (KDEE…DPNI), 36–65 (DDKP…NPNA), 69–98 (DGEP…DPNL), 102–131 (RKNT…NLNA), 135–164 (SGYP…NPNL), 168–197 (DGSP…NVEA), 201–231 (DGNT…DKEK), 239–268 (NGET…TVNI), and 272–301 (AGYT…ELKE). One can recognise a Glutamine amidotransferase type-1 domain in the interval 348–580 (NVEDIDYRKI…VQSAETFMNK (233 aa)). Cysteine 444 acts as the Nucleophile in catalysis. Residues histidine 547 and glutamate 549 contribute to the active site.

In Rickettsia bellii (strain RML369-C), this protein is Putative ankyrin repeat protein RBE_0997.